A 353-amino-acid chain; its full sequence is tRNA N6-adenosine threonylcarbamoyltransferase (353 aa).

Fe cation is bound by residues histidine 109 and histidine 113. Substrate-binding positions include 136–140 (TVSGG), aspartate 169, glycine 182, aspartate 186, and asparagine 284. Aspartate 312 lines the Fe cation pocket.

The protein belongs to the KAE1 / TsaD family. Fe(2+) is required as a cofactor.

Its subcellular location is the cytoplasm. It catalyses the reaction L-threonylcarbamoyladenylate + adenosine(37) in tRNA = N(6)-L-threonylcarbamoyladenosine(37) in tRNA + AMP + H(+). Its function is as follows. Required for the formation of a threonylcarbamoyl group on adenosine at position 37 (t(6)A37) in tRNAs that read codons beginning with adenine. Is involved in the transfer of the threonylcarbamoyl moiety of threonylcarbamoyl-AMP (TC-AMP) to the N6 group of A37, together with TsaE and TsaB. TsaD likely plays a direct catalytic role in this reaction. The polypeptide is tRNA N6-adenosine threonylcarbamoyltransferase (Chlorobium phaeobacteroides (strain DSM 266 / SMG 266 / 2430)).